Reading from the N-terminus, the 336-residue chain is Ribosomal RNA small subunit methyltransferase C (336 aa).

It belongs to the methyltransferase superfamily. RsmC family. As to quaternary structure, monomer.

It localises to the cytoplasm. The enzyme catalyses guanosine(1207) in 16S rRNA + S-adenosyl-L-methionine = N(2)-methylguanosine(1207) in 16S rRNA + S-adenosyl-L-homocysteine + H(+). Its function is as follows. Specifically methylates the guanine in position 1207 of 16S rRNA in the 30S particle. This chain is Ribosomal RNA small subunit methyltransferase C, found in Buchnera aphidicola subsp. Schizaphis graminum (strain Sg).